The sequence spans 346 residues: Cyclin-dependent kinase 20 (346 aa).

The Protein kinase domain maps to 4 to 288 (YCILGRIGEG…ASKALLHQYF (285 aa)). Residues 10-18 (IGEGAHGIV) and K33 contribute to the ATP site. The Proton acceptor role is filled by D127.

This sequence belongs to the protein kinase superfamily. CMGC Ser/Thr protein kinase family. CDC2/CDKX subfamily. As to quaternary structure, monomer. Interacts with TBC1D32 and MAK.

It localises to the nucleus. It is found in the cytoplasm. The protein resides in the cell projection. The protein localises to the cilium. The catalysed reaction is L-seryl-[protein] + ATP = O-phospho-L-seryl-[protein] + ADP + H(+). The enzyme catalyses L-threonyl-[protein] + ATP = O-phospho-L-threonyl-[protein] + ADP + H(+). In terms of biological role, required for high-level Shh responses in the developing neural tube. Together with TBC1D32, controls the structure of the primary cilium by coordinating assembly of the ciliary membrane and axoneme, allowing GLI2 to be properly activated in response to SHH signaling. Involved in cell growth. Activates CDK2, a kinase involved in the control of the cell cycle, by phosphorylating residue 'Thr-160'. This chain is Cyclin-dependent kinase 20 (CDK20), found in Pongo abelii (Sumatran orangutan).